We begin with the raw amino-acid sequence, 643 residues long: Hepatoma-derived growth factor-related protein 2 (643 aa).

In terms of domain architecture, PWWP spans 7 to 64 (PGDLVFAKMKGYPHWPARIDDVKDGAVKPPPNKYPIFFYGTHETAFLAPKDLFPYEKC). Disordered regions lie at residues 88 to 450 (PQAS…KKPE) and 548 to 643 (LESQ…NQTS). Residues 90 to 104 (ASYSLPPASVSSSDS) are compositionally biased toward low complexity. The span at 107–116 (PEEKSTARSD) shows a compositional bias: basic and acidic residues. Over residues 176-187 (SEEENSDSDQDF) the composition is skewed to acidic residues. Positions 194–204 (PRIQRRTTNLG) are enriched in polar residues. Positions 209 to 231 (IFAESDSKSDESEDEKKEEEQKK) are enriched in basic and acidic residues. Residues 232–249 (SPSSSSASSPSLSSSDSE) are compositionally biased toward low complexity. Basic and acidic residues-rich tracts occupy residues 290–353 (SVDR…DSSK), 373–382 (EDKKPVKEVK), and 417–450 (RPSE…KKPE). A coiled-coil region spans residues 295–345 (SEWKKRDEERRRELEERRKKEQEEQLRRLREEEREEEERKKREKAEKGDKS). The span at 549–559 (ESQQKTVQKVN) shows a compositional bias: polar residues. Composition is skewed to basic and acidic residues over residues 560–575 (TAEK…GKVE) and 608–622 (NKTE…HAEH).

This sequence belongs to the HDGF family.

It is found in the nucleus. Its subcellular location is the cytoplasm. Its function is as follows. May act as a regulator of myogenesis. Promotes the repair of DNA double-strand breaks (DSBs) through the homologous recombination pathway by facilitating the recruitment of the DNA endonuclease RBBP8 to the DSBs. In Xenopus tropicalis (Western clawed frog), this protein is Hepatoma-derived growth factor-related protein 2 (hdgfl2).